The following is an 859-amino-acid chain: Envelope glycoprotein gp160 (859 aa).

The N-terminal stretch at Met1 to Lys23 is a signal peptide. At Gln24 to Tyr678 the chain is on the extracellular side. Asn37 is a glycosylation site (N-linked (GlcNAc...) asparagine; by host). A disulfide bond links Cys44 and Cys57. Asn70, Asn112, Asn122, Asn142, Asn150, Asn165, Asn191, Asn206, Asn238, Asn241, Asn248, Asn272, Asn278, Asn289, Asn300, Asn310, Asn343, Asn367, Asn400, Asn410, Asn413, Asn450, Asn464, and Asn468 each carry an N-linked (GlcNAc...) asparagine; by host glycan. Cystine bridges form between Cys101/Cys214, Cys108/Cys205, Cys113/Cys164, Cys227/Cys257, and Cys237/Cys249. The V1 stretch occupies residues Cys113–Gln163. The segment at Cys164 to Cys205 is V2. The segment at Cys305 to Trp337 is V3. A disulfide bridge links Cys305 with Cys338. 2 cysteine pairs are disulfide-bonded: Cys392–Cys449 and Cys399–Cys422. The segment at Cys399 to Cys422 is V4. Residues Ser465–Val471 are V5. The interval Gly514–Thr534 is fusion peptide. Positions Leu577–Gln593 are immunosuppression. N-linked (GlcNAc...) asparagine; by host glycosylation is found at Asn613, Asn622, and Asn638. Residues Gln626–Gln647 adopt a coiled-coil conformation. The tract at residues Lys659 to His680 is MPER; binding to GalCer. Residues Ile679 to Val699 traverse the membrane as a helical segment. Residues Gln700–Leu859 lie on the Cytoplasmic side of the membrane. Residues Tyr709–Val712 carry the YXXV motif; contains endocytosis signal motif. The tract at residues Ser715–Asp744 is disordered. Cys775 is lipidated: S-palmitoyl cysteine; by host. Positions Leu858–Leu859 match the Di-leucine internalization motif motif.

As to quaternary structure, the mature envelope protein (Env) consists of a homotrimer of non-covalently associated gp120-gp41 heterodimers. The resulting complex protrudes from the virus surface as a spike. There seems to be as few as 10 spikes on the average virion. Interacts with human CD4, CCR5 and CXCR4, to form a P4HB/PDI-CD4-CXCR4-gp120 complex. Gp120 also interacts with the C-type lectins CD209/DC-SIGN and CLEC4M/DC-SIGNR (collectively referred to as DC-SIGN(R)). Gp120 and gp41 interact with GalCer. The mature envelope protein (Env) consists of a homotrimer of non-covalently associated gp120-gp41 heterodimers. The resulting complex protrudes from the virus surface as a spike. There seems to be as few as 10 spikes on the average virion. Post-translationally, specific enzymatic cleavages in vivo yield mature proteins. Envelope glycoproteins are synthesized as an inactive precursor that is heavily N-glycosylated and processed likely by host cell furin in the Golgi to yield the mature SU and TM proteins. The cleavage site between SU and TM requires the minimal sequence [KR]-X-[KR]-R. Palmitoylation of the transmembrane protein and of Env polyprotein (prior to its proteolytic cleavage) is essential for their association with host cell membrane lipid rafts. Palmitoylation is therefore required for envelope trafficking to classical lipid rafts, but not for viral replication.

It is found in the virion membrane. The protein resides in the host cell membrane. Its subcellular location is the host endosome membrane. Functionally, the surface protein gp120 (SU) attaches the virus to the host lymphoid cell by binding to the primary receptor CD4. This interaction induces a structural rearrangement creating a high affinity binding site for a chemokine coreceptor like CXCR4 and/or CCR5. This peculiar 2 stage receptor-interaction strategy allows gp120 to maintain the highly conserved coreceptor-binding site in a cryptic conformation, protected from neutralizing antibodies. Since CD4 also displays a binding site for the disulfide-isomerase P4HB/PDI, a P4HB/PDI-CD4-CXCR4-gp120 complex may form. In that complex, P4HB/PDI could reach and reduce gp120 disulfide bonds, causing major conformational changes in gp120. TXN, another PDI family member could also be involved in disulfide rearrangements in Env during fusion. These changes are transmitted to the transmembrane protein gp41 and are thought to activate its fusogenic potential by unmasking its fusion peptide. Its function is as follows. The surface protein gp120 is a ligand for CD209/DC-SIGN and CLEC4M/DC-SIGNR, which are respectively found on dendritic cells (DCs), and on endothelial cells of liver sinusoids and lymph node sinuses. These interactions allow capture of viral particles at mucosal surfaces by these cells and subsequent transmission to permissive cells. DCs are professional antigen presenting cells, critical for host immunity by inducing specific immune responses against a broad variety of pathogens. They act as sentinels in various tissues where they take up antigen, process it, and present it to T-cells following migration to lymphoid organs. HIV subverts the migration properties of dendritic cells to gain access to CD4+ T-cells in lymph nodes. Virus transmission to permissive T-cells occurs either in trans (without DCs infection, through viral capture and transmission), or in cis (following DCs productive infection, through the usual CD4-gp120 interaction), thereby inducing a robust infection. In trans infection, bound virions remain infectious over days and it is proposed that they are not degraded, but protected in non-lysosomal acidic organelles within the DCs close to the cell membrane thus contributing to the viral infectious potential during DCs' migration from the periphery to the lymphoid tissues. On arrival at lymphoid tissues, intact virions recycle back to DCs' cell surface allowing virus transmission to CD4+ T-cells. Virion capture also seems to lead to MHC-II-restricted viral antigen presentation, and probably to the activation of HIV-specific CD4+ cells. In terms of biological role, the transmembrane protein gp41 (TM) acts as a class I viral fusion protein. Under the current model, the protein has at least 3 conformational states: pre-fusion native state, pre-hairpin intermediate state, and post-fusion hairpin state. During fusion of viral and target intracellular membranes, the coiled coil regions (heptad repeats) assume a trimer-of-hairpins structure, positioning the fusion peptide in close proximity to the C-terminal region of the ectodomain. The formation of this structure appears to drive apposition and subsequent fusion of viral and target cell membranes. Complete fusion occurs in host cell endosomes and is dynamin-dependent, however some lipid transfer might occur at the plasma membrane. The virus undergoes clathrin-dependent internalization long before endosomal fusion, thus minimizing the surface exposure of conserved viral epitopes during fusion and reducing the efficacy of inhibitors targeting these epitopes. Membranes fusion leads to delivery of the nucleocapsid into the cytoplasm. The envelope glycoprotein gp160 precursor down-modulates cell surface CD4 antigen by interacting with it in the endoplasmic reticulum and blocking its transport to the cell surface. Functionally, the gp120-gp41 heterodimer seems to contribute to T-cell depletion during HIV-1 infection. The envelope glycoproteins expressed on the surface of infected cells induce apoptosis through an interaction with uninfected cells expressing the receptor (CD4) and the coreceptors CXCR4 or CCR5. This type of bystander killing may be obtained by at least three distinct mechanisms. First, the interaction between the 2 cells can induce cellular fusion followed by nuclear fusion within the syncytium. Syncytia are condemned to die from apoptosis. Second, the 2 interacting cells may not fuse entirely and simply exchange plasma membrane lipids, after a sort of hemifusion process, followed by rapid death. Third, it is possible that virus-infected cells, on the point of undergoing apoptosis, fuse with CD4-expressing cells, in which case apoptosis is rapidly transmitted from one cell to the other and thus occurs in a sort of contagious fashion. Its function is as follows. The gp120-gp41 heterodimer allows rapid transcytosis of the virus through CD4 negative cells such as simple epithelial monolayers of the intestinal, rectal and endocervical epithelial barriers. Both gp120 and gp41 specifically recognize glycosphingolipids galactosyl-ceramide (GalCer) or 3' sulfo-galactosyl-ceramide (GalS) present in the lipid rafts structures of epithelial cells. Binding to these alternative receptors allows the rapid transcytosis of the virus through the epithelial cells. This transcytotic vesicle-mediated transport of virions from the apical side to the basolateral side of the epithelial cells does not involve infection of the cells themselves. In Human immunodeficiency virus type 2 subtype B (isolate D205) (HIV-2), this protein is Envelope glycoprotein gp160 (env).